The following is a 396-amino-acid chain: Probable circularly permuted 1,3-beta-glucanase YJL171C (396 aa).

The N-terminal stretch at 1-19 (MLQSIVLSVCMFMLHTVAA) is a signal peptide. N51, N99, N122, N146, N174, N219, and N249 each carry an N-linked (GlcNAc...) asparagine glycan. Positions 259-264 (EYDIFE) match the ExDxxE motif motif. N267, N300, N328, and N346 each carry an N-linked (GlcNAc...) asparagine glycan. N368 is lipidated: GPI-anchor amidated asparagine. A propeptide spans 369-396 (GVALTKMQNGVWYYILAIFTAFTQVVLI) (removed in mature form).

This sequence belongs to the PGA52 family. Extensively N-glycosylated.

It localises to the cell membrane. The enzyme catalyses Hydrolysis of (1-&gt;3)-beta-D-glucosidic linkages in (1-&gt;3)-beta-D-glucans.. In terms of biological role, probable circularly permuted 1,3-beta-glucanase involved in cell wall modification through beta-1,3-glucan network alterations such as increased branching or remodeling. The chain is Probable circularly permuted 1,3-beta-glucanase YJL171C (TOH1) from Saccharomyces cerevisiae (strain ATCC 204508 / S288c) (Baker's yeast).